Reading from the N-terminus, the 637-residue chain is CD2-associated protein (637 aa).

The SH3 1; truncated domain maps to 1–59 (MVDYIVEYDYDAVHDDELTIRVGEIIRNVKKLQEEGWLEGELNGRRGMFPDNFVKEIKR). The tract at residues 1 to 175 (MVDYIVEYDY…ESTEDGETHN (175 aa)) is interaction with ANLN and localization to the midbody. A Glycyl lysine isopeptide (Lys-Gly) (interchain with G-Cter in SUMO2) cross-link involves residue Lys58. A phosphoserine mark is found at Ser80 and Ser86. In terms of domain architecture, SH3 2 spans 108–167 (TKKRQCKVLFDYSPQNEDELELIVGDVIDVIEEVEEGWWSGTLNNKLGLFPSNFVKELES). Residues 166–177 (ESTEDGETHNAQ) show a composition bias toward basic and acidic residues. The disordered stretch occupies residues 166–209 (ESTEDGETHNAQEESEVPLTGPTSPLPSPGNGSEPAPGSVAQPK). Phosphoserine is present on Ser224. Positions 226 to 254 (KLRTRTSSSETEEKKTEKPLILQPLGSRT) are disordered. Residues 269–330 (KAKEYCRTLF…PDNFAVQISE (62 aa)) form the SH3 3 domain. A disordered region spans residues 333 to 455 (KDFPKPKKPP…KLDPEQLPVR (123 aa)). 3 consecutive short sequence motifs (SH3-binding) follow at residues 336-352 (PKPK…APKP), 378-397 (KPSK…APTK), and 410-422 (PKRP…PPPP). A compositionally biased stretch (pro residues) spans 341–351 (PPPPAKGPAPK). The span at 356–379 (AAEKKAFPLKAEEKDEKSLLEQKP) shows a compositional bias: basic and acidic residues. A compositionally biased stretch (basic and acidic residues) spans 437–449 (IDTEPVSKPKLDP). Phosphoserine is present on residues Ser458, Ser469, Ser510, and Ser514. A disordered region spans residues 488 to 555 (HLTANRPKMP…SLSTPSSASK (68 aa)). Basic and acidic residues predominate over residues 517–539 (KTLKLPKEDDSGNLKPLEFKKDA). Residue Lys523 forms a Glycyl lysine isopeptide (Lys-Gly) (interchain with G-Cter in SUMO2) linkage. The span at 540 to 555 (SYSSKSSLSTPSSASK) shows a compositional bias: low complexity. The residue at position 563 (Thr563) is a Phosphothreonine. Positions 578–636 (RNSVDELRAQIIELLCIVDALKKDHGKELEKLRKELEEEKAMRSNLEVEIAKLKKAVLL) form a coiled coil. The residue at position 580 (Ser580) is a Phosphoserine.

In terms of assembly, homodimer. Interacts with F-actin, PKD2, NPHS1 and NPHS2. Interacts with WTIP. Interacts with DDN; interaction is direct. Interacts (via SH3 2 domain) with CBL (via phosphorylated C-terminus). Interacts with BCAR1/p130Cas (via SH3 domain). Interacts with MVB12A and ARHGAP17. Interacts with ANLN, CD2 and CBLB. Interacts with PDCD6IP and TSG101. Interacts with RIN3. Interacts directly with RET (inactive) and CBLC; upon RET activation by GDNF suggested to dissociate from RET as CBLC:CD2AP complex. Interacts with CGNL1 and SH3BP1; probably part of a complex at cell junctions. Interacts with CAPZA1. In terms of processing, phosphorylated on tyrosine residues; probably by c-Abl, Fyn and c-Src. As to expression, expressed in podocytes (at protein level).

It localises to the cytoplasm. The protein resides in the cytoskeleton. Its subcellular location is the cell projection. It is found in the ruffle. The protein localises to the cell junction. In terms of biological role, seems to act as an adapter protein between membrane proteins and the actin cytoskeleton. In collaboration with CBLC, modulates the rate of RET turnover and may act as regulatory checkpoint that limits the potency of GDNF on neuronal survival. Controls CBLC function, converting it from an inhibitor to a promoter of RET degradation. May play a role in receptor clustering and cytoskeletal polarity in the junction between T-cell and antigen-presenting cell. May anchor the podocyte slit diaphragm to the actin cytoskeleton in renal glomerolus. Also required for cytokinesis. Plays a role in epithelial cell junctions formation. In Mus musculus (Mouse), this protein is CD2-associated protein (Cd2ap).